Reading from the N-terminus, the 571-residue chain is Kelch-like protein 28 (571 aa).

Positions 35–102 (CDIILRVGDV…AYTGTVFISQ (68 aa)) constitute a BTB domain. Kelch repeat units lie at residues 284-331 (VLCA…VLDQ), 332-386 (KVFV…VLAG), 387-433 (EVFA…VLDG), 435-479 (LYAI…VMLG), 480-526 (FIFV…VIDN), and 528-570 (LYVV…GLTA).

The protein is Kelch-like protein 28 (Klhl28) of Mus musculus (Mouse).